The chain runs to 192 residues: Molybdenum cofactor guanylyltransferase (192 aa).

Residues Lys21, Asp67, and Asp101 each coordinate GTP. Asp101 lines the Mg(2+) pocket.

The protein belongs to the MobA family. In terms of assembly, monomer. The cofactor is Mg(2+).

The protein resides in the cytoplasm. It carries out the reaction Mo-molybdopterin + GTP + H(+) = Mo-molybdopterin guanine dinucleotide + diphosphate. Its function is as follows. Transfers a GMP moiety from GTP to Mo-molybdopterin (Mo-MPT) cofactor (Moco or molybdenum cofactor) to form Mo-molybdopterin guanine dinucleotide (Mo-MGD) cofactor. The protein is Molybdenum cofactor guanylyltransferase of Neisseria meningitidis serogroup C / serotype 2a (strain ATCC 700532 / DSM 15464 / FAM18).